The following is a 134-amino-acid chain: Phosphoribosyl-ATP pyrophosphatase 2 (134 aa).

Belongs to the PRA-PH family.

Its subcellular location is the cytoplasm. It carries out the reaction 1-(5-phospho-beta-D-ribosyl)-ATP + H2O = 1-(5-phospho-beta-D-ribosyl)-5'-AMP + diphosphate + H(+). Its pathway is amino-acid biosynthesis; L-histidine biosynthesis; L-histidine from 5-phospho-alpha-D-ribose 1-diphosphate: step 2/9. The chain is Phosphoribosyl-ATP pyrophosphatase 2 (hisE2) from Bradyrhizobium diazoefficiens (strain JCM 10833 / BCRC 13528 / IAM 13628 / NBRC 14792 / USDA 110).